The following is a 171-amino-acid chain: MDYFTLFGLPARYQIDTQALSFRFQDLQRQYHPDKFANGTQAQQLAAVQQSATINQAWQTLRHPLTRAEYLLSLHGFDLASEQHTVRDTAFLMEQLTLREELDDIEQSKDDARLESFIKRVQKMFDARLQQMVEQLDNAAWDAAADTVRKLRFLDKLRSSAEQLEEKLLDF.

In terms of domain architecture, J spans 2-74; sequence DYFTLFGLPA…LTRAEYLLSL (73 aa).

Belongs to the HscB family. Interacts with HscA and stimulates its ATPase activity. Interacts with IscU.

Functionally, co-chaperone involved in the maturation of iron-sulfur cluster-containing proteins. Seems to help targeting proteins to be folded toward HscA. The chain is Co-chaperone protein HscB from Salmonella paratyphi A (strain AKU_12601).